We begin with the raw amino-acid sequence, 353 residues long: Uroporphyrinogen decarboxylase (353 aa).

Substrate contacts are provided by residues 29 to 33, aspartate 78, tyrosine 154, serine 209, and histidine 322; that span reads RQAGR.

It belongs to the uroporphyrinogen decarboxylase family. Homodimer.

Its subcellular location is the cytoplasm. It carries out the reaction uroporphyrinogen III + 4 H(+) = coproporphyrinogen III + 4 CO2. Its pathway is porphyrin-containing compound metabolism; protoporphyrin-IX biosynthesis; coproporphyrinogen-III from 5-aminolevulinate: step 4/4. In terms of biological role, catalyzes the decarboxylation of four acetate groups of uroporphyrinogen-III to yield coproporphyrinogen-III. This Bacillus velezensis (strain DSM 23117 / BGSC 10A6 / LMG 26770 / FZB42) (Bacillus amyloliquefaciens subsp. plantarum) protein is Uroporphyrinogen decarboxylase.